The chain runs to 447 residues: Phosphoglucosamine mutase (447 aa).

Serine 107 functions as the Phosphoserine intermediate in the catalytic mechanism. 4 residues coordinate Mg(2+): serine 107, aspartate 246, aspartate 248, and aspartate 250. The residue at position 107 (serine 107) is a Phosphoserine.

It belongs to the phosphohexose mutase family. Requires Mg(2+) as cofactor. In terms of processing, activated by phosphorylation.

It carries out the reaction alpha-D-glucosamine 1-phosphate = D-glucosamine 6-phosphate. In terms of biological role, catalyzes the conversion of glucosamine-6-phosphate to glucosamine-1-phosphate. The protein is Phosphoglucosamine mutase of Ralstonia nicotianae (strain ATCC BAA-1114 / GMI1000) (Ralstonia solanacearum).